A 345-amino-acid chain; its full sequence is Holliday junction branch migration complex subunit RuvB (345 aa).

Residues 4-185 form a large ATPase domain (RuvB-L) region; the sequence is TDRLIAPSTQ…FGIVSRLEFY (182 aa). ATP-binding positions include Leu-24, Arg-25, Gly-66, Lys-69, Thr-70, Thr-71, 132–134, Arg-175, Tyr-185, and Arg-222; that span reads EDY. Thr-70 provides a ligand contact to Mg(2+). Residues 186-256 are small ATPAse domain (RuvB-S); sequence TADELARIVH…IADAALKMLD (71 aa). Residues 259–345 are head domain (RuvB-H); the sequence is KLGFDVMDRK…KIGTGELWQQ (87 aa). Residues Arg-295, Arg-314, and Arg-319 each contribute to the DNA site.

This sequence belongs to the RuvB family. As to quaternary structure, homohexamer. Forms an RuvA(8)-RuvB(12)-Holliday junction (HJ) complex. HJ DNA is sandwiched between 2 RuvA tetramers; dsDNA enters through RuvA and exits via RuvB. An RuvB hexamer assembles on each DNA strand where it exits the tetramer. Each RuvB hexamer is contacted by two RuvA subunits (via domain III) on 2 adjacent RuvB subunits; this complex drives branch migration. In the full resolvosome a probable DNA-RuvA(4)-RuvB(12)-RuvC(2) complex forms which resolves the HJ.

The protein resides in the cytoplasm. The enzyme catalyses ATP + H2O = ADP + phosphate + H(+). The RuvA-RuvB-RuvC complex processes Holliday junction (HJ) DNA during genetic recombination and DNA repair, while the RuvA-RuvB complex plays an important role in the rescue of blocked DNA replication forks via replication fork reversal (RFR). RuvA specifically binds to HJ cruciform DNA, conferring on it an open structure. The RuvB hexamer acts as an ATP-dependent pump, pulling dsDNA into and through the RuvAB complex. RuvB forms 2 homohexamers on either side of HJ DNA bound by 1 or 2 RuvA tetramers; 4 subunits per hexamer contact DNA at a time. Coordinated motions by a converter formed by DNA-disengaged RuvB subunits stimulates ATP hydrolysis and nucleotide exchange. Immobilization of the converter enables RuvB to convert the ATP-contained energy into a lever motion, pulling 2 nucleotides of DNA out of the RuvA tetramer per ATP hydrolyzed, thus driving DNA branch migration. The RuvB motors rotate together with the DNA substrate, which together with the progressing nucleotide cycle form the mechanistic basis for DNA recombination by continuous HJ branch migration. Branch migration allows RuvC to scan DNA until it finds its consensus sequence, where it cleaves and resolves cruciform DNA. The protein is Holliday junction branch migration complex subunit RuvB of Methylobacillus flagellatus (strain ATCC 51484 / DSM 6875 / VKM B-1610 / KT).